A 317-amino-acid chain; its full sequence is mRNA 3'-end-processing protein yth-1 (317 aa).

The interval 1–20 is disordered; sequence MATTTQTTTNSLPSGAGGPQ. C3H1-type zinc fingers lie at residues 51–78, 93–120, 121–149, 150–177, and 179–202; these read PADR…HVTA, GFGS…HEYN, LRKM…HIDP, LSRL…HFRR, and LCLY…HPRW. A compositionally biased stretch (basic and acidic residues) spans 202–217; that stretch reads WTADKDMEKPRAKGEG. Positions 202-317 are disordered; sequence WTADKDMEKP…GRGGFRGKGH (116 aa). Residues 223–237 are compositionally biased toward low complexity; it reads QQQQQQQQQQHMGDA. Positions 253 to 288 are enriched in basic and acidic residues; sequence YMDRERERDRDNREREMMMQGRDRDGGGHDRHKDRF. Over residues 289–301 the composition is skewed to gly residues; it reads GGGGGGGGGGRGR. The span at 302–317 shows a compositional bias: basic residues; that stretch reads GGWRGRGRGGFRGKGH.

The protein belongs to the CPSF4/YTH1 family.

It localises to the nucleus. Its function is as follows. Component of the cleavage factor I (CF I) involved in pre-mRNA 3'-end processing. This Neurospora crassa (strain ATCC 24698 / 74-OR23-1A / CBS 708.71 / DSM 1257 / FGSC 987) protein is mRNA 3'-end-processing protein yth-1 (yth-1).